The primary structure comprises 233 residues: Uridylate kinase (233 aa).

Position 9–10 (9–10 (GS)) interacts with ATP. Gly43 provides a ligand contact to UMP. ATP-binding residues include Gly44 and Arg48. Residues Asp65 and 113 to 119 (VTPGQTT) contribute to the UMP site. Thr139, Tyr145, and Asp148 together coordinate ATP.

This sequence belongs to the UMP kinase family. In terms of assembly, homohexamer.

It is found in the cytoplasm. The catalysed reaction is UMP + ATP = UDP + ADP. It participates in pyrimidine metabolism; CTP biosynthesis via de novo pathway; UDP from UMP (UMPK route): step 1/1. Its activity is regulated as follows. Inhibited by UTP. Functionally, catalyzes the reversible phosphorylation of UMP to UDP. The protein is Uridylate kinase of Methanosarcina acetivorans (strain ATCC 35395 / DSM 2834 / JCM 12185 / C2A).